The following is a 233-amino-acid chain: Cytochrome c oxidase subunit 3 (233 aa).

Helical transmembrane passes span 62 to 82, 98 to 118, 135 to 155, and 172 to 192; these read VVLFLVAESAIFLGLFTAYLI, LELLLPGVNSIILISSSFVMH, WFGITAAMGIIFLAGQMYEYF, and VLTGFHGLHVTFGLLLILSVL.

It belongs to the cytochrome c oxidase subunit 3 family.

The protein resides in the cell membrane. The enzyme catalyses 4 Fe(II)-[cytochrome c] + O2 + 8 H(+)(in) = 4 Fe(III)-[cytochrome c] + 2 H2O + 4 H(+)(out). The chain is Cytochrome c oxidase subunit 3 (ctaE) from Synechocystis sp. (strain ATCC 27184 / PCC 6803 / Kazusa).